Here is a 93-residue protein sequence, read N- to C-terminus: Aspartyl/glutamyl-tRNA(Asn/Gln) amidotransferase subunit C (93 aa).

This sequence belongs to the GatC family. In terms of assembly, heterotrimer of A, B and C subunits.

It carries out the reaction L-glutamyl-tRNA(Gln) + L-glutamine + ATP + H2O = L-glutaminyl-tRNA(Gln) + L-glutamate + ADP + phosphate + H(+). The catalysed reaction is L-aspartyl-tRNA(Asn) + L-glutamine + ATP + H2O = L-asparaginyl-tRNA(Asn) + L-glutamate + ADP + phosphate + 2 H(+). Functionally, allows the formation of correctly charged Asn-tRNA(Asn) or Gln-tRNA(Gln) through the transamidation of misacylated Asp-tRNA(Asn) or Glu-tRNA(Gln) in organisms which lack either or both of asparaginyl-tRNA or glutaminyl-tRNA synthetases. The reaction takes place in the presence of glutamine and ATP through an activated phospho-Asp-tRNA(Asn) or phospho-Glu-tRNA(Gln). The sequence is that of Aspartyl/glutamyl-tRNA(Asn/Gln) amidotransferase subunit C from Methanococcoides burtonii (strain DSM 6242 / NBRC 107633 / OCM 468 / ACE-M).